A 70-amino-acid polypeptide reads, in one-letter code: Guanine nucleotide-binding protein subunit gamma-1 (70 aa).

C67 carries the post-translational modification Cysteine methyl ester. C67 carries S-geranylgeranyl cysteine lipidation. The propeptide at 68 to 70 is removed in mature form; sequence TVL.

Belongs to the G protein gamma family. G proteins are composed of 3 units, alpha, beta and gamma. As to expression, predominantly expressed in the central nervous system.

Its subcellular location is the cell membrane. Its function is as follows. Guanine nucleotide-binding proteins (G proteins) are involved as a modulator or transducer in various transmembrane signaling systems. The beta and gamma chains are required for the GTPase activity, for replacement of GDP by GTP, and for G protein-effector interaction. This is Guanine nucleotide-binding protein subunit gamma-1 (Ggamma1) from Drosophila melanogaster (Fruit fly).